A 183-amino-acid polypeptide reads, in one-letter code: uncharacterized protein (183 aa).

In terms of domain architecture, GGDEF spans 55-183 (PRAAVLLVDL…RSRRGSRPAR (129 aa)).

Might be involved in pSAM2 replication control. This is an uncharacterized protein from Streptomyces ambofaciens.